The sequence spans 77 residues: RNA-binding protein Hfq (77 aa).

In terms of domain architecture, Sm spans 10–70 (DIFLNSARKN…ITTVTPEKPI (61 aa)).

The protein belongs to the Hfq family. Homohexamer.

In terms of biological role, RNA chaperone that binds small regulatory RNA (sRNAs) and mRNAs to facilitate mRNA translational regulation in response to envelope stress, environmental stress and changes in metabolite concentrations. Also binds with high specificity to tRNAs. This Clostridium botulinum (strain Eklund 17B / Type B) protein is RNA-binding protein Hfq.